Reading from the N-terminus, the 213-residue chain is Histone H1.1 (213 aa).

A disordered region spans residues methionine 1–serine 43. An N-acetylserine modification is found at serine 2. Phosphoserine occurs at positions 2 and 12. The span at alanine 8–proline 18 shows a compositional bias: low complexity. Residue lysine 17 is modified to N6-acetyllysine. Over residues alanine 20–proline 37 the composition is skewed to basic residues. The residue at position 36 (lysine 36) is an N6-(beta-hydroxybutyryl)lysine. The region spanning alanine 38 to lysine 111 is the H15 domain. Serine 43 is subject to Phosphoserine. Residue lysine 54 is modified to N6-(beta-hydroxybutyryl)lysine. A Citrulline modification is found at arginine 56. Lysine 66 is modified (N6-(beta-hydroxybutyryl)lysine). A Phosphoserine modification is found at serine 67. The residue at position 77 (lysine 77) is an N6-acetyllysine. Lysine 87 bears the N6-(beta-hydroxybutyryl)lysine mark. Lysine 92 carries the N6-(beta-hydroxybutyryl)lysine; alternate modification. Lysine 92 is subject to N6-acetyllysine; alternate. Residue serine 106 is modified to Phosphoserine. Lysine 108 bears the N6-(beta-hydroxybutyryl)lysine mark. Residues lysine 112–lysine 213 form a disordered region. The span at threonine 120–lysine 144 shows a compositional bias: low complexity. Lysine 121 is modified (N6-acetyllysine). 2 stretches are compositionally biased toward basic residues: residues lysine 145–alanine 178 and lysine 185–lysine 213. At threonine 201 the chain carries Phosphothreonine.

This sequence belongs to the histone H1/H5 family. Interacts with DFFB. In terms of processing, H1 histones are progressively phosphorylated during the cell cycle, becoming maximally phosphorylated during late G2 phase and M phase, and being dephosphorylated sharply thereafter. Post-translationally, citrullination at Arg-56 (H1R54ci) by PADI4 takes place within the DNA-binding site of H1 and results in its displacement from chromatin and global chromatin decondensation, thereby promoting pluripotency and stem cell maintenance. Hydroxybutyrylation of histones is induced by starvation. In terms of tissue distribution, restricted to thymus, testis and spleen. Present also in lymphocytic and neuronal cells. Increases in testis starting with a low level at day 5 and reaching high concentrations in 20-day old and adult animals.

The protein localises to the nucleus. The protein resides in the chromosome. Histone H1 protein binds to linker DNA between nucleosomes forming the macromolecular structure known as the chromatin fiber. Histones H1 are necessary for the condensation of nucleosome chains into higher-order structured fibers. Also acts as a regulator of individual gene transcription through chromatin remodeling, nucleosome spacing and DNA methylation. The chain is Histone H1.1 from Mus musculus (Mouse).